A 169-amino-acid chain; its full sequence is 6,7-dimethyl-8-ribityllumazine synthase (169 aa).

5-amino-6-(D-ribitylamino)uracil is bound by residues Phe24, 58 to 60 (ALE), and 82 to 84 (AVI). A (2S)-2-hydroxy-3-oxobutyl phosphate-binding site is contributed by 87–88 (ET). His90 serves as the catalytic Proton donor. Asn115 is a binding site for 5-amino-6-(D-ribitylamino)uracil. Arg129 serves as a coordination point for (2S)-2-hydroxy-3-oxobutyl phosphate.

It belongs to the DMRL synthase family.

It carries out the reaction (2S)-2-hydroxy-3-oxobutyl phosphate + 5-amino-6-(D-ribitylamino)uracil = 6,7-dimethyl-8-(1-D-ribityl)lumazine + phosphate + 2 H2O + H(+). It functions in the pathway cofactor biosynthesis; riboflavin biosynthesis; riboflavin from 2-hydroxy-3-oxobutyl phosphate and 5-amino-6-(D-ribitylamino)uracil: step 1/2. Functionally, catalyzes the formation of 6,7-dimethyl-8-ribityllumazine by condensation of 5-amino-6-(D-ribitylamino)uracil with 3,4-dihydroxy-2-butanone 4-phosphate. This is the penultimate step in the biosynthesis of riboflavin. The protein is 6,7-dimethyl-8-ribityllumazine synthase of Burkholderia vietnamiensis (strain G4 / LMG 22486) (Burkholderia cepacia (strain R1808)).